Consider the following 880-residue polypeptide: MGTTAPGPICLLDLCDQKLLDFVCNVDNKDFMWLKEIEEEAERMFIREFSNEPELMPKTPSQKNRRKKRRVSNIQDENRDPVRKRLSRRKSRSSQVGTRHLRSKPVTIVEENGFPVLQRITRATAAAAAAAAAASVASASSSSTAGSPTVLTKKAVVEISTSERLSAELQLTKLKGSLPPSPVSQGTLTSEEELTPKKSEAGKLDSVTVNSLKATPQSPKNRGVGEGRSVSKLKIARASWGLQDSPGSTDSPWQERVLSPILLNNILPTTAKSPLGNIRSVRRSLISQDSQVPLASKYNLVAKQENGSRRSSRRIAKKAGKEPEASARIICHSYLERLLNVEVPQNVGLEQEPVEVAEPEEAEEEQEVSKNSGCPSKPRSATKIAISTPTSKPAAAGQTTTVEEQEAELDQTDGHREPPQSVRRKRSYKQAISEPDEEQLEDEELQPCQNKTPSPPCPANKVVRPLRTFLHTVQKNQMLMTPTLASRSSVMKSFIKRNTPLRVDPKCSFVEKERQRLESLRRKEEAEQRRRQKVEEDKRRRLEEVKLKREERLRKVLQARERVEQMKEEKKKQIEQKFAQIDEKTEKAKEERLAEKAKKKATAKKMEEVEARRKQEEEARRLRWLQQEEEERRHQEMLQRKKEEEQERRKAAEARRLAEQREQERRREQERREQERREQERREQERKEQERREQEQERLRAKREMQEREKALRLQKERLQKELEEKKRKEEQQRLAEQQLQEEQAKKAKEVAAARKVLNMTVDVQSPVCTSYQMTPQGPKSIPKISVDDYGMDLNSDDSTDDESHPRKPIPSWAKGTQLSQAIVHQYYHPPNILELFGSILPLDLEDIFKKRKTRYHKRTSSAVWNSPPLKATMVPSSGD.

The segment at 52-104 (EPELMPKTPSQKNRRKKRRVSNIQDENRDPVRKRLSRRKSRSSQVGTRHLRSK) is disordered. Residues Ser-72, Ser-142, and Ser-147 each carry the phosphoserine modification. Phosphothreonine is present on residues Thr-149 and Thr-189. Residues 175–229 (KGSLPPSPVSQGTLTSEEELTPKKSEAGKLDSVTVNSLKATPQSPKNRGVGEGRS) are disordered. Ser-190 bears the Phosphoserine mark. Residues 194 to 203 (LTPKKSEAGK) show a composition bias toward basic and acidic residues. Residues Thr-195 and Thr-215 each carry the phosphothreonine modification. Polar residues predominate over residues 207–220 (VTVNSLKATPQSPK). Phosphoserine occurs at positions 218, 239, 245, 248, 251, and 259. Thr-270 is modified (phosphothreonine). A phosphoserine mark is found at Ser-284 and Ser-290. Disordered stretches follow at residues 303–322 (KQEN…AGKE) and 350–461 (EQEP…PANK). Residues 352–366 (EPVEVAEPEEAEEEQ) are compositionally biased toward acidic residues. Ser-376 is modified (phosphoserine). Thr-382 is modified (phosphothreonine). A compositionally biased stretch (polar residues) spans 385-402 (AISTPTSKPAAAGQTTTV). A Phosphoserine modification is found at Ser-421. A compositionally biased stretch (acidic residues) spans 434 to 445 (EPDEEQLEDEEL). Residue Asn-450 is glycosylated (N-linked (GlcNAc...) asparagine). At Thr-452 the chain carries Phosphothreonine. Residues Ser-454 and Ser-488 each carry the phosphoserine modification. Residues 506–733 (KCSFVEKERQ…EEKKRKEEQQ (228 aa)) are SAH. A coiled-coil region spans residues 506–759 (KCSFVEKERQ…EVAAARKVLN (254 aa)). Disordered regions lie at residues 513–541 (ERQR…KRRR), 563–617 (VEQM…KQEE), 629–713 (EEER…KALR), and 775–813 (TPQG…IPSW). Composition is skewed to basic and acidic residues over residues 563-596 (VEQM…LAEK), 604-617 (KKME…KQEE), and 630-713 (EERR…KALR). The segment at 794–868 (LNSDDSTDDE…RTSSAVWNSP (75 aa)) is IN box. Phosphoserine occurs at positions 796 and 799. A Phosphothreonine modification is found at Thr-800. A Phosphothreonine; by AURKB modification is found at Thr-860. Residues Ser-861, Ser-862, and Ser-867 each carry the phosphoserine modification.

The protein belongs to the INCENP family. As to quaternary structure, component of the chromosomal passenger complex (CPC) composed of at least BIRC5/survivin, CDCA8/borealin, INCENP, AURKB or AURKC; in the complex binds directly to AURKB or AURKC via the IN box, and forms a triple-helix bundle-based subcomplex with BIRC5 and CDCA8 via its N-terminus. The reported homodimerization is questioned as the SAH domain is shown to be monomeric. Interacts with H2AZ1. Interacts with CBX1 and CBX3. Interacts with tubulin beta chain. Interacts with EVI5. Interacts with CBX5; POGZ and INCENP compete for interaction with CBX5. Interacts with POGZ. Interacts with JTB. In terms of processing, phosphorylation by AURKB at its C-terminal part is important for AURKB activation by INCENP.

The protein localises to the chromosome. The protein resides in the centromere. It is found in the cytoplasm. It localises to the cytoskeleton. Its subcellular location is the spindle. The protein localises to the nucleus. The protein resides in the kinetochore. It is found in the midbody. Functionally, component of the chromosomal passenger complex (CPC), a complex that acts as a key regulator of mitosis. The CPC complex has essential functions at the centromere in ensuring correct chromosome alignment and segregation and is required for chromatin-induced microtubule stabilization and spindle assembly. Acts as a scaffold regulating CPC localization and activity. The C-terminus associates with AURKB or AURKC, the N-terminus associated with BIRC5/survivin and CDCA8/borealin tethers the CPC to the inner centromere, and the microtubule binding activity within the central SAH domain directs AURKB/C toward substrates near microtubules. The flexibility of the SAH domain is proposed to allow AURKB/C to follow substrates on dynamic microtubules while ensuring CPC docking to static chromatin. Activates AURKB and AURKC. Controls the kinetochore localization of BUB1. In Mus musculus (Mouse), this protein is Inner centromere protein (Incenp).